We begin with the raw amino-acid sequence, 462 residues long: Hemopexin (462 aa).

The signal sequence occupies residues 1 to 23; it reads MARVLGAPVALGLWSLCWSLAIA. O-linked (GalNAc...) threonine glycans are attached at residues Thr-24 and Thr-29. Residues 29–48 form a disordered region; the sequence is TSAHGNVAEGETKPDPDVTE. Positions 30-40 are O-glycosylated at one site; that stretch reads SAHGNVAEGET. Positions 38–48 are enriched in basic and acidic residues; that stretch reads GETKPDPDVTE. 3 cysteine pairs are disulfide-bonded: Cys-50/Cys-231, Cys-149/Cys-154, and Cys-188/Cys-200. Hemopexin repeat units follow at residues 53-93, 94-139, 140-184, and 185-231; these read GWSF…WKNF, PSPV…FPGI, PSPL…SWPA, and VGNC…FMPC. An N-linked (GlcNAc...) (complex) asparagine glycan is attached at Asn-64. His-79 contributes to the heme binding site. His-150 serves as a coordination point for heme. Asn-187 is a glycosylation site (N-linked (GlcNAc...) (complex) asparagine). His-236 contributes to the heme binding site. N-linked (GlcNAc...) asparagine glycans are attached at residues Asn-240 and Asn-246. 3 cysteine pairs are disulfide-bonded: Cys-257–Cys-460, Cys-366–Cys-408, and Cys-418–Cys-435. Hemopexin repeat units lie at residues 259–304, 305–352, 357–396, and 400–450; these read PHLV…WPQG, PSAV…VGTP, LDSV…WTEL, and HEKV…ALPQ. Position 293 (His-293) interacts with heme. Asn-453 carries an N-linked (GlcNAc...) (complex) asparagine glycan.

This sequence belongs to the hemopexin family. In terms of assembly, interacts with FLVCR1. As to quaternary structure, (Microbial infection) Interacts with hepatitis E virus/HEV protein ORF3. N- and O-glycosylated. O-glycosylated with core 1 or possibly core 8 glycans. O-glycosylation in the 30-40 region is minor compared to glycosylation at Thr-24 and Thr-29. In terms of tissue distribution, expressed by the liver and secreted in plasma.

The protein resides in the secreted. In terms of biological role, binds heme and transports it to the liver for breakdown and iron recovery, after which the free hemopexin returns to the circulation. The chain is Hemopexin (HPX) from Homo sapiens (Human).